The chain runs to 226 residues: UPF0758 protein SPT_1135 (226 aa).

The region spanning 103-225 (SILSSQKLAK…YFSYREKTDL (123 aa)) is the MPN domain. Zn(2+) is bound by residues histidine 174, histidine 176, and aspartate 187. A JAMM motif motif is present at residues 174-187 (HNHPSGAVAPSQND).

It belongs to the UPF0758 family.

The chain is UPF0758 protein SPT_1135 from Streptococcus pneumoniae (strain Taiwan19F-14).